Consider the following 45-residue polypeptide: Large ribosomal subunit protein bL36 (45 aa).

The disordered stretch occupies residues 1–45 (MRVSSSIKADPSKGDKLVRRKGRLYVINKKDPNRKQRQAGPARKK).

This sequence belongs to the bacterial ribosomal protein bL36 family.

The sequence is that of Large ribosomal subunit protein bL36 from Chlamydia trachomatis serovar L2 (strain ATCC VR-902B / DSM 19102 / 434/Bu).